The primary structure comprises 73 residues: Long neurotoxin 1 (73 aa).

5 disulfides stabilise this stretch: C3/C21, C14/C42, C27/C31, C46/C57, and C58/C63.

Belongs to the three-finger toxin family. Long-chain subfamily. Type II alpha-neurotoxin sub-subfamily. As to expression, expressed by the venom gland.

The protein resides in the secreted. Its function is as follows. Binds with high affinity to muscular (alpha-1/CHRNA1) and neuronal (alpha-7/CHRNA7) nicotinic acetylcholine receptor (nAChR) and inhibits acetylcholine from binding to the receptor, thereby impairing neuromuscular and neuronal transmission. This is Long neurotoxin 1 from Ophiophagus hannah (King cobra).